A 174-amino-acid polypeptide reads, in one-letter code: Large ribosomal subunit protein uL18 (174 aa).

It belongs to the universal ribosomal protein uL18 family. Part of the 50S ribosomal subunit. Contacts the 5S and 23S rRNAs.

In terms of biological role, this is one of the proteins that bind and probably mediate the attachment of the 5S RNA into the large ribosomal subunit, where it forms part of the central protuberance. The polypeptide is Large ribosomal subunit protein uL18 (Methanosarcina barkeri (strain Fusaro / DSM 804)).